Reading from the N-terminus, the 172-residue chain is Large ribosomal subunit protein uL10 (172 aa).

This sequence belongs to the universal ribosomal protein uL10 family. In terms of assembly, part of the ribosomal stalk of the 50S ribosomal subunit. The N-terminus interacts with L11 and the large rRNA to form the base of the stalk. The C-terminus forms an elongated spine to which L12 dimers bind in a sequential fashion forming a multimeric L10(L12)X complex.

Its function is as follows. Forms part of the ribosomal stalk, playing a central role in the interaction of the ribosome with GTP-bound translation factors. The polypeptide is Large ribosomal subunit protein uL10 (Lawsonia intracellularis (strain PHE/MN1-00)).